A 162-amino-acid chain; its full sequence is Small ribosomal subunit protein uS5 (162 aa).

The S5 DRBM domain occupies 11–74; sequence LTDRVVHISR…EQAKKNLIKV (64 aa).

It belongs to the universal ribosomal protein uS5 family. In terms of assembly, part of the 30S ribosomal subunit. Contacts proteins S4 and S8.

With S4 and S12 plays an important role in translational accuracy. Functionally, located at the back of the 30S subunit body where it stabilizes the conformation of the head with respect to the body. The sequence is that of Small ribosomal subunit protein uS5 from Pelobacter propionicus (strain DSM 2379 / NBRC 103807 / OttBd1).